The chain runs to 449 residues: Trigger factor (449 aa).

Residues 173 to 258 (GDRVTVDFVG…LKKVEWPHLP (86 aa)) enclose the PPIase FKBP-type domain.

It belongs to the FKBP-type PPIase family. Tig subfamily.

It localises to the cytoplasm. It catalyses the reaction [protein]-peptidylproline (omega=180) = [protein]-peptidylproline (omega=0). Involved in protein export. Acts as a chaperone by maintaining the newly synthesized protein in an open conformation. Functions as a peptidyl-prolyl cis-trans isomerase. This chain is Trigger factor, found in Burkholderia pseudomallei (strain 1710b).